Reading from the N-terminus, the 920-residue chain is Histone-lysine N-methyltransferase, H3 lysine-4 specific (920 aa).

Positions 94-179 constitute an RRM domain; the sequence is TQVFVSNISP…KPLSVVLDRD (86 aa). Residues 205–216 are compositionally biased toward basic and acidic residues; the sequence is KQRFEREDESSR. Disordered regions lie at residues 205–242 and 448–485; these read KQRFEREDESSRQKLSAAMNEDIPPWRQPSKNSQTLSN and KRVDSSKMNLSAGSKTKSKLQRRRRRRHEARPLHYQLN. 2 stretches are compositionally biased toward polar residues: residues 233 to 242 and 453 to 462; these read PSKNSQTLSN and SKMNLSAGSK. Over residues 463 to 476 the composition is skewed to basic residues; that stretch reads TKSKLQRRRRRRHE. The short motif at 749 to 754 is the RxxxRR motif element; the sequence is RVNNRR. Positions 781 to 898 constitute an SET domain; that stretch reads KQLHFGPSRI…HGEELTYDYK (118 aa). Tyrosine 897 contacts S-adenosyl-L-methionine. The region spanning 904–920 is the Post-SET domain; it reads DKIPCLCGAPTCRGYLN.

Belongs to the class V-like SAM-binding methyltransferase superfamily. In terms of assembly, component of the Set1C/COMPASS complex composed of ash2, sdc1, set1, shg1, spp1, swd1, swd2 and swd3.

The protein localises to the nucleus. Its subcellular location is the chromosome. The catalysed reaction is L-lysyl(4)-[histone H3] + 3 S-adenosyl-L-methionine = N(6),N(6),N(6)-trimethyl-L-lysyl(4)-[histone H3] + 3 S-adenosyl-L-homocysteine + 3 H(+). The enzyme catalyses N(6)-methyl-L-lysyl(4)-[histone H3] + S-adenosyl-L-methionine = N(6),N(6)-dimethyl-L-lysyl(4)-[histone H3] + S-adenosyl-L-homocysteine + H(+). It carries out the reaction N(6),N(6)-dimethyl-L-lysyl(4)-[histone H3] + S-adenosyl-L-methionine = N(6),N(6),N(6)-trimethyl-L-lysyl(4)-[histone H3] + S-adenosyl-L-homocysteine + H(+). Catalytic component of the COMPASS (Set1C) complex that specifically mono-, di- and trimethylates histone H3 to form H3K4me1/2/3. Binds RNA which might negatively affect its histone methyltransferase activity. COMPASS recognizes ubiquitinated H2B on one face of the nucleosome which stimulates the methylation of H3 on the opposing face. Methylation promotes maintenance of active chromatin states at euchromatic chromosomal domains and is present throughout the cell cycle. Plays a role in telomere maintenance and DNA repair in an ATM kinase rad3-dependent pathway. Required for efficient telomeric and centromeric silencing. This chain is Histone-lysine N-methyltransferase, H3 lysine-4 specific, found in Schizosaccharomyces pombe (strain 972 / ATCC 24843) (Fission yeast).